The following is a 442-amino-acid chain: Mimosinase, chloroplastic (442 aa).

The N-terminal 35 residues, 1–35 (MALPSAFLNPFVPSPVTANPRTKFARVGKGFNVSC), are a transit peptide targeting the chloroplast. The pyridoxal 5'-phosphate site is built by Tyr-103, Arg-105, Gly-133, Met-134, Ser-252, and Thr-254. Lys-255 carries the N6-(pyridoxal phosphate)lysine modification.

This sequence belongs to the trans-sulfuration enzymes family. Forms homodimers. May form homotetramers from two homodimers. Requires pyridoxal 5'-phosphate as cofactor.

The protein localises to the plastid. It is found in the chloroplast. The enzyme catalyses L-mimosine + H2O = 3-hydroxy-4H-pyrid-4-one + pyruvate + NH4(+). The catalysed reaction is L,L-cystathionine + H2O = L-homocysteine + pyruvate + NH4(+). It carries out the reaction an S-substituted L-cysteine + H2O = a thiol + pyruvate + NH4(+). Functionally, catalyzes the degradation of mimosine, which is a toxic secondary metabolite found in all Mimosa and Leucaena species. Catalyzes the degradation of cystathionine, but seems to have lower preference toward cystathionine over mimosine. The chain is Mimosinase, chloroplastic from Mimosa pudica (Sensitive plant).